The chain runs to 206 residues: HTH-type transcriptional regulator Hpr (206 aa).

One can recognise an HTH marR-type domain in the interval 13–157; that stretch reads ALLFSQRMAQ…MMCIIRNIYG (145 aa). The segment at residues 63–86 is a DNA-binding region (H-T-H motif); sequence ISEIAKFGVMHVSTAFNFSKKLEE. Positions 186-206 are disordered; sequence SEELEDSADAAEKAAKANQIV.

As to quaternary structure, homodimer.

In terms of biological role, negative regulator of protease production and sporulation. This chain is HTH-type transcriptional regulator Hpr, found in Bacillus pumilus (strain SAFR-032).